A 277-amino-acid chain; its full sequence is Urease accessory protein UreD (277 aa).

This sequence belongs to the UreD family. UreD, UreF and UreG form a complex that acts as a GTP-hydrolysis-dependent molecular chaperone, activating the urease apoprotein by helping to assemble the nickel containing metallocenter of UreC. The UreE protein probably delivers the nickel.

The protein resides in the cytoplasm. In terms of biological role, required for maturation of urease via the functional incorporation of the urease nickel metallocenter. This Pseudomonas putida (strain ATCC 47054 / DSM 6125 / CFBP 8728 / NCIMB 11950 / KT2440) protein is Urease accessory protein UreD.